We begin with the raw amino-acid sequence, 442 residues long: GTPase Der (442 aa).

2 consecutive EngA-type G domains span residues 2–167 (RTIA…PIQN) and 175–351 (FKFC…EQAM). GTP contacts are provided by residues 8 to 15 (GKPNVGKS), 55 to 59 (DTGGI), 119 to 122 (NKIE), 181 to 188 (GRPNVGKS), 228 to 232 (DTAGI), and 293 to 296 (NKWD). Positions 352–436 (RKIATSLLND…PITLYWQDKN (85 aa)) constitute a KH-like domain.

It belongs to the TRAFAC class TrmE-Era-EngA-EngB-Septin-like GTPase superfamily. EngA (Der) GTPase family. Associates with the 50S ribosomal subunit.

GTPase that plays an essential role in the late steps of ribosome biogenesis. The polypeptide is GTPase Der (Ureaplasma parvum serovar 3 (strain ATCC 27815 / 27 / NCTC 11736)).